A 235-amino-acid polypeptide reads, in one-letter code: Probable deoxycytidine kinase FPV151 (235 aa).

ATP is bound at residue 30-38; that stretch reads GNISAGKST. Residues glutamate 53, tyrosine 68, and glutamine 79 each contribute to the substrate site. Glutamate 104 functions as the Proton acceptor in the catalytic mechanism. Substrate is bound by residues arginine 105, aspartate 110, and glutamate 172.

This sequence belongs to the DCK/DGK family.

It catalyses the reaction 2'-deoxycytidine + a ribonucleoside 5'-triphosphate = dCMP + a ribonucleoside 5'-diphosphate + H(+). The sequence is that of Probable deoxycytidine kinase FPV151 from Vertebrata (FPV).